The sequence spans 76 residues: Sec-independent protein translocase protein TatA (76 aa).

A helical membrane pass occupies residues 1-21; sequence MGSFSIWHWLIVLVIVMLIFG. The tract at residues 47 to 76 is disordered; sequence NADKPAEEAQPTQQVGGHTIDVEVKEKTKS. Basic and acidic residues predominate over residues 66 to 76; sequence IDVEVKEKTKS.

It belongs to the TatA/E family. The Tat system comprises two distinct complexes: a TatABC complex, containing multiple copies of TatA, TatB and TatC subunits, and a separate TatA complex, containing only TatA subunits. Substrates initially bind to the TatABC complex, which probably triggers association of the separate TatA complex to form the active translocon.

The protein resides in the cell inner membrane. In terms of biological role, part of the twin-arginine translocation (Tat) system that transports large folded proteins containing a characteristic twin-arginine motif in their signal peptide across membranes. TatA could form the protein-conducting channel of the Tat system. This is Sec-independent protein translocase protein TatA from Dechloromonas aromatica (strain RCB).